The sequence spans 121 residues: Acidic phospholipase A2 SpII RP4 (121 aa).

7 cysteine pairs are disulfide-bonded: cysteine 25-cysteine 114, cysteine 27-cysteine 43, cysteine 42-cysteine 94, cysteine 48-cysteine 121, cysteine 49-cysteine 87, cysteine 56-cysteine 80, and cysteine 74-cysteine 85. Ca(2+)-binding residues include tyrosine 26, glycine 28, and glycine 30. Residue histidine 46 is part of the active site. Position 47 (aspartate 47) interacts with Ca(2+). Aspartate 88 is a catalytic residue.

Ca(2+) serves as cofactor. Expressed by the venom gland.

Its subcellular location is the secreted. It catalyses the reaction a 1,2-diacyl-sn-glycero-3-phosphocholine + H2O = a 1-acyl-sn-glycero-3-phosphocholine + a fatty acid + H(+). Snake venom phospholipase A2 (PLA2) which exhibits indirect hemolysis, induces mild edema inflammation in the foot pads of mice and slightly delays anticoagulant activities. In mice, not lethal, even at the highest dose, and exhibits low to moderate myotoxicity on muscular fibers. PLA2 catalyzes the calcium-dependent hydrolysis of the 2-acyl groups in 3-sn-phosphoglycerides. The protein is Acidic phospholipase A2 SpII RP4 of Bothrops alternatus (Urutu).